The sequence spans 367 residues: Quinolinate synthase (367 aa).

Positions 64 and 82 each coordinate iminosuccinate. Position 127 (C127) interacts with [4Fe-4S] cluster. Residues 153 to 155 and S170 contribute to the iminosuccinate site; that span reads YVN. C216 lines the [4Fe-4S] cluster pocket. Residues 242–244 and T259 each bind iminosuccinate; that span reads HPE. Residue C302 participates in [4Fe-4S] cluster binding.

Belongs to the quinolinate synthase family. Type 2 subfamily. [4Fe-4S] cluster serves as cofactor.

The protein localises to the cytoplasm. The catalysed reaction is iminosuccinate + dihydroxyacetone phosphate = quinolinate + phosphate + 2 H2O + H(+). Its pathway is cofactor biosynthesis; NAD(+) biosynthesis; quinolinate from iminoaspartate: step 1/1. Functionally, catalyzes the condensation of iminoaspartate with dihydroxyacetone phosphate to form quinolinate. The sequence is that of Quinolinate synthase from Caulobacter vibrioides (strain ATCC 19089 / CIP 103742 / CB 15) (Caulobacter crescentus).